A 304-amino-acid polypeptide reads, in one-letter code: Porphobilinogen deaminase (304 aa).

At Cys-241 the chain carries S-(dipyrrolylmethanemethyl)cysteine.

Belongs to the HMBS family. In terms of assembly, monomer. It depends on dipyrromethane as a cofactor.

The catalysed reaction is 4 porphobilinogen + H2O = hydroxymethylbilane + 4 NH4(+). It participates in porphyrin-containing compound metabolism; protoporphyrin-IX biosynthesis; coproporphyrinogen-III from 5-aminolevulinate: step 2/4. Functionally, tetrapolymerization of the monopyrrole PBG into the hydroxymethylbilane pre-uroporphyrinogen in several discrete steps. This Ruthia magnifica subsp. Calyptogena magnifica protein is Porphobilinogen deaminase.